The primary structure comprises 348 residues: Isopentenyl-diphosphate delta-isomerase (348 aa).

14–15 serves as a coordination point for substrate; it reads RK. FMN-binding positions include Ser72, 73–75, Ser103, and Asn131; that span reads SMT. 103-105 serves as a coordination point for substrate; sequence SQR. Position 166 (Gln166) interacts with substrate. Residue Glu167 participates in Mg(2+) binding. FMN contacts are provided by residues Lys198, Thr228, 278-280, and 299-300; these read GIR and AR.

This sequence belongs to the IPP isomerase type 2 family. As to quaternary structure, homooctamer. Dimer of tetramers. The cofactor is FMN. Requires NADPH as cofactor. Mg(2+) is required as a cofactor.

The protein resides in the cytoplasm. The enzyme catalyses isopentenyl diphosphate = dimethylallyl diphosphate. Involved in the biosynthesis of isoprenoids. Catalyzes the 1,3-allylic rearrangement of the homoallylic substrate isopentenyl (IPP) to its allylic isomer, dimethylallyl diphosphate (DMAPP). The protein is Isopentenyl-diphosphate delta-isomerase of Synechococcus sp. (strain ATCC 27144 / PCC 6301 / SAUG 1402/1) (Anacystis nidulans).